The chain runs to 276 residues: Phosphatidylglycerol--prolipoprotein diacylglyceryl transferase (276 aa).

3 helical membrane-spanning segments follow: residues 17 to 37, 63 to 83, and 95 to 115; these read LAIH…FFLA, ILFL…CLFY, and ILAV…VLAS. Residue Arg146 coordinates a 1,2-diacyl-sn-glycero-3-phospho-(1'-sn-glycerol). Helical transmembrane passes span 182–202, 209–229, and 235–255; these read SQVY…WLYA, GQVS…AEYF, and FLGI…PMIV.

It belongs to the Lgt family.

It is found in the cell inner membrane. The catalysed reaction is L-cysteinyl-[prolipoprotein] + a 1,2-diacyl-sn-glycero-3-phospho-(1'-sn-glycerol) = an S-1,2-diacyl-sn-glyceryl-L-cysteinyl-[prolipoprotein] + sn-glycerol 1-phosphate + H(+). It participates in protein modification; lipoprotein biosynthesis (diacylglyceryl transfer). Functionally, catalyzes the transfer of the diacylglyceryl group from phosphatidylglycerol to the sulfhydryl group of the N-terminal cysteine of a prolipoprotein, the first step in the formation of mature lipoproteins. This Polaromonas sp. (strain JS666 / ATCC BAA-500) protein is Phosphatidylglycerol--prolipoprotein diacylglyceryl transferase.